The following is a 269-amino-acid chain: Phosphatidylglycerol--prolipoprotein diacylglyceryl transferase (269 aa).

Transmembrane regions (helical) follow at residues 17-37 (LKIHWYGLMYLIGIGGAWLLA), 56-76 (LVFWLSMGVIVGGRLGYVLFY), 92-112 (WKGGMSFHGGFIGVMLAALWF), 120-140 (FFELMDFVAPLVPIGLGAGRI), 174-194 (PSQLYQFALEGVALFVILWLY), 202-222 (MAVSGMFALFYGIFRFIVEFV), and 237-257 (LTMGQLLCVPMIVGGIFLIWL). R139 serves as a coordination point for a 1,2-diacyl-sn-glycero-3-phospho-(1'-sn-glycerol).

Belongs to the Lgt family.

Its subcellular location is the cell inner membrane. It catalyses the reaction L-cysteinyl-[prolipoprotein] + a 1,2-diacyl-sn-glycero-3-phospho-(1'-sn-glycerol) = an S-1,2-diacyl-sn-glyceryl-L-cysteinyl-[prolipoprotein] + sn-glycerol 1-phosphate + H(+). The protein operates within protein modification; lipoprotein biosynthesis (diacylglyceryl transfer). Functionally, catalyzes the transfer of the diacylglyceryl group from phosphatidylglycerol to the sulfhydryl group of the N-terminal cysteine of a prolipoprotein, the first step in the formation of mature lipoproteins. This is Phosphatidylglycerol--prolipoprotein diacylglyceryl transferase from Pseudomonas entomophila (strain L48).